A 331-amino-acid polypeptide reads, in one-letter code: Probable protein phosphatase 2C 72 (331 aa).

Residues 43–324 (LGSVCSIQGT…DDITVICLFL (282 aa)) form the PPM-type phosphatase domain. Mn(2+) contacts are provided by Asp-78, Gly-79, Asp-268, and Asp-315.

It belongs to the PP2C family. It depends on Mg(2+) as a cofactor. The cofactor is Mn(2+).

The enzyme catalyses O-phospho-L-seryl-[protein] + H2O = L-seryl-[protein] + phosphate. It carries out the reaction O-phospho-L-threonyl-[protein] + H2O = L-threonyl-[protein] + phosphate. The polypeptide is Probable protein phosphatase 2C 72 (Arabidopsis thaliana (Mouse-ear cress)).